Consider the following 113-residue polypeptide: Venom protein 184 (113 aa).

Residues 1-21 (MKTTLIFCILGIVIPTAVVSS) form the signal peptide.

Contains 3 disulfide bonds. As to expression, expressed by the venom gland.

It is found in the secreted. The sequence is that of Venom protein 184 from Lychas mucronatus (Chinese swimming scorpion).